We begin with the raw amino-acid sequence, 278 residues long: Large ribosomal subunit protein uL2 (278 aa).

A disordered region spans residues 222-278 (GVVMNPVDHPHGGGEGRTSGGRHPVTPWGKPTKGAKTRKNKSTDKFIIRSRHERKKR). The span at 269 to 278 (IRSRHERKKR) shows a compositional bias: basic residues.

It belongs to the universal ribosomal protein uL2 family. As to quaternary structure, part of the 50S ribosomal subunit. Forms a bridge to the 30S subunit in the 70S ribosome.

Functionally, one of the primary rRNA binding proteins. Required for association of the 30S and 50S subunits to form the 70S ribosome, for tRNA binding and peptide bond formation. It has been suggested to have peptidyltransferase activity; this is somewhat controversial. Makes several contacts with the 16S rRNA in the 70S ribosome. The sequence is that of Large ribosomal subunit protein uL2 from Maricaulis maris (strain MCS10) (Caulobacter maris).